The following is a 551-amino-acid chain: Solute carrier family 22 member 6 (551 aa).

The Cytoplasmic segment spans residues 1-23 (MAFNDLLKQVGGVGRFQRIQVTL). A helical membrane pass occupies residues 24–44 (VVLPLLLMASHNTLQNFTAAI). The Extracellular portion of the chain corresponds to 45-135 (PPHHCRPPAH…LVCSHRALRQ (91 aa)). Asn56, Asn92, and Asn113 each carry an N-linked (GlcNAc...) asparagine glycan. The helical transmembrane segment at 136-156 (LGQSLYMAGVLIGAMVFGYLA) threads the bilayer. Residues 157–164 (DRLGRRKV) lie on the Cytoplasmic side of the membrane. Residues 165-187 (LILNYLQTAVSGTCAAFSPNFTV) traverse the membrane as a helical segment. The Extracellular portion of the chain corresponds to 188-195 (YCTFRLLS). The helical transmembrane segment at 196–216 (GMSLAGIALNCMTLNVEWMPI) threads the bilayer. Over 217–224 (HTRAYVGT) the chain is Cytoplasmic. Residues 225-245 (LAGYVYSTGQFLLAGVAYAVP) traverse the membrane as a helical segment. The Extracellular segment spans residues 246–248 (HWR). The chain crosses the membrane as a helical span at residues 249 to 269 (YLQLLVSVPFFAFFVYSWFFI). Residues 270–337 (ESARWYSTPG…ELLRCPALRH (68 aa)) are Cytoplasmic-facing. Residues 338 to 358 (LFLCLSLLWFATSFAYYGLVM) traverse the membrane as a helical segment. The Extracellular segment spans residues 359–368 (DLQGFGVSIY). A helical membrane pass occupies residues 369–389 (LIQVIFGAVDLPAKLVCFLVI). The Cytoplasmic segment spans residues 390–395 (NSLGRR). Residues 396 to 416 (PAQMASLLLAGICILVNGVIP) traverse the membrane as a helical segment. Over 417-425 (RDQSIVRTS) the chain is Extracellular. A helical transmembrane segment spans residues 426–446 (LAVLGKGCLASSFNCIFLYTG). Residues 447 to 484 (ELYPTMIRQTGLGMGSTMARVGSIVSPLVSMTSELYPS) lie on the Cytoplasmic side of the membrane. The chain crosses the membrane as a helical span at residues 485–505 (LPLFIYGAVPVAASAATALLP). The Extracellular portion of the chain corresponds to 506-551 (ETLGQPLPDTVQDLESRRRGKPRRQQQEQQKQMVPLQASVQEKNGL). The tract at residues 520–551 (ESRRRGKPRRQQQEQQKQMVPLQASVQEKNGL) is disordered.

This sequence belongs to the major facilitator (TC 2.A.1) superfamily. Organic cation transporter (TC 2.A.1.19) family. Glycosylated. Glycosylation is necessary for proper targeting of the transporter to the plasma membrane.

The protein localises to the basolateral cell membrane. It localises to the basal cell membrane. The catalysed reaction is (6R)-L-erythro-5,6,7,8-tetrahydrobiopterin(out) + a dicarboxylate(in) = (6R)-L-erythro-5,6,7,8-tetrahydrobiopterin(in) + a dicarboxylate(out). It catalyses the reaction L-erythro-7,8-dihydrobiopterin(out) + a dicarboxylate(in) = L-erythro-7,8-dihydrobiopterin(in) + a dicarboxylate(out). The enzyme catalyses L-sepiapterin(out) + a dicarboxylate(in) = L-sepiapterin(in) + a dicarboxylate(out). It carries out the reaction prostaglandin F2alpha(out) + a dicarboxylate(in) = prostaglandin F2alpha(in) + a dicarboxylate(out). The catalysed reaction is prostaglandin E2(out) + a dicarboxylate(in) = prostaglandin E2(in) + a dicarboxylate(out). It catalyses the reaction 3',5'-cyclic AMP(out) + a dicarboxylate(in) = 3',5'-cyclic AMP(in) + a dicarboxylate(out). The enzyme catalyses 3',5'-cyclic GMP(out) + a dicarboxylate(in) = 3',5'-cyclic GMP(in) + a dicarboxylate(out). It carries out the reaction urate(out) + a dicarboxylate(in) = urate(in) + a dicarboxylate(out). The catalysed reaction is kynurenate(out) + glutarate(in) = kynurenate(in) + glutarate(out). It catalyses the reaction (indol-3-yl)acetate(out) + a dicarboxylate(in) = (indol-3-yl)acetate(in) + a dicarboxylate(out). The enzyme catalyses indoxyl sulfate(out) + a dicarboxylate(in) = indoxyl sulfate(in) + a dicarboxylate(out). It carries out the reaction N-benzoylglycine(out) + a dicarboxylate(in) = N-benzoylglycine(in) + a dicarboxylate(out). The catalysed reaction is 3-carboxy-4-methyl-5-propyl-2-furanpropanoate(out) + a dicarboxylate(in) = 3-carboxy-4-methyl-5-propyl-2-furanpropanoate(in) + a dicarboxylate(out). In terms of biological role, secondary active transporter that functions as a Na(+)-independent organic anion (OA)/dicarboxylate antiporter where the uptake of one molecule of OA into the cell is coupled with an efflux of one molecule of intracellular dicarboxylate such as 2-oxoglutarate or glutarate. Mediates the uptake of OA across the basolateral side of proximal tubule epithelial cells, thereby contributing to the renal elimination of endogenous OA from the systemic circulation into the urine. Functions as a biopterin transporters involved in the uptake and the secretion of coenzymes tetrahydrobiopterin (BH4), dihydrobiopterin (BH2) and sepiapterin to urine, thereby determining baseline levels of blood biopterins. Transports prostaglandin E2 (PGE2) and prostaglandin F2-alpha (PGF2-alpha) and may contribute to their renal excretion. Also mediates the uptake of cyclic nucleotides such as cAMP and cGMP. Involved in the transport of neuroactive tryptophan metabolites kynurenate (KYNA) and xanthurenate (XA) and may contribute to their secretion from the brain. May transport glutamate. Also involved in the disposition of uremic toxins and potentially toxic xenobiotics by the renal organic anion secretory pathway, helping reduce their undesired toxicological effects on the body. Uremic toxins include the indoxyl sulfate (IS), hippurate/N-benzoylglycine (HA), indole acetate (IA), 3-carboxy-4- methyl-5-propyl-2-furanpropionate (CMPF) and urate. Xenobiotics include the mycotoxin ochratoxin (OTA). May also contribute to the transport of organic compounds in testes across the blood-testis-barrier. May also work as a bidirectional OA/dicarboxylate exchanger. This chain is Solute carrier family 22 member 6, found in Oryctolagus cuniculus (Rabbit).